The sequence spans 525 residues: Nucleoprotein (525 aa).

The homomultimerization stretch occupies residues 1-36; the sequence is MATLLRSLALFKRNKDKPPITSGSGGAIRGIKHIII. The segment at 1-375 is RNA packaging and organization of the helical nucleocapsid; it reads MATLLRSLAL…QEMVRRSAGK (375 aa). Residues 1 to 403 form a ncore region; the sequence is MATLLRSLAL…VSEIAMHTTE (403 aa). The Nuclear localization signal motif lies at 70–77; sequence TGALIGIL. RNA is bound by residues Lys-180, Arg-195, Gln-202, and Tyr-260. Thr-279 is subject to Phosphothreonine; by host. Asn-351 contributes to the RNA binding site. The segment at 373-391 is homomultimerization; it reads AGKVSSTLASELGITAEDA. Residues 404-525 are ntail; sequence DRISRAVGPR…RVYNDRDLLE (122 aa). The segment at 418-525 is disordered; sequence SFLHGDQSEN…RVYNDRDLLE (108 aa). The Nuclear export signal motif lies at 425-440; sequence SENELPRWEGKEDMRV. Residues 428–452 are compositionally biased toward basic and acidic residues; the sequence is ELPRWEGKEDMRVKQSRGEARESYR. Residues 477–505 are interaction with the phosphoprotein; that stretch reads TASEPSQDPQDSRRSAEALLRLQAMAGIS.

The protein belongs to the paramyxoviruses nucleocapsid family. In terms of assembly, homomultimer; forms the nucleocapsid. Binds to viral genomic RNA. N0 interacts (via Ncore) with the phosphoprotein (via N-terminus); this interaction allows P to chaperon N0 to avoid N polymerization and non-specific RNA binding before encapsidation. Interacts (via the Ntail) as N-RNA template with the phosphoprotein (via C-terminus XD); this interaction maintains the P/L complex anchored to the nucleocapsid template during the sequential transcription. Interacts with the phosphoprotein; this interaction leads to the formation of membraneless organelles that function as viral replication factories. Interacts with human FCGR2B protein. Interacts with human PPIA/CYPA and PPIB/CYPB. Phosphorylation at Thr-279 is required for the formation of the nucleocapsid.

It localises to the virion. Its subcellular location is the host cytoplasm. The protein localises to the host nucleus. In terms of biological role, forms the helical nucleocapsid (NC) in a ratio of 1 N per 6 ribonucleotides, protecting the genome from nucleases. The nucleocapsid (NC) has a helical structure with either 12.35 or 11.64 N per turn, approximately 20 nm in diameter, with a hollow central cavity approximately 5 nm in diameter. The encapsidated genomic RNA serves as template for transcription and replication; encapsidation by N is coupled to RNA synthesis. Forms the encapsidation complex with the phosphoprotein protein P. Before encapsidation, the newly synthesized free N protein, so-called N0, is chaperoned by P. Participates, together with P, in the formation of viral factories (viroplasms), which are large inclusions in the host cytoplasm where replication takes place. N is released in the blood following lysis of measles infected cells, it interacts then with human FCGR2B on immune cells, inducing apoptosis and blocking inflammatory immune response. This is Nucleoprotein (N) from Homo sapiens (Human).